Here is a 172-residue protein sequence, read N- to C-terminus: Protein sym-1 (172 aa).

The next 5 membrane-spanning stretches (helical) occupy residues 13-33, 52-72, 94-114, 128-148, and 152-172; these read PLLT…VAAQ, MVLY…RFLQ, GLFA…LEGT, LSTN…VVPL, and VLFV…LNGQ.

It belongs to the peroxisomal membrane protein PXMP2/4 family.

It localises to the mitochondrion inner membrane. Its function is as follows. May be involved in cellular response to stress. Required to maintain mitochondrial DNA (mtDNA) integrity and stability. In Neurospora crassa (strain ATCC 24698 / 74-OR23-1A / CBS 708.71 / DSM 1257 / FGSC 987), this protein is Protein sym-1 (sym-1).